A 104-amino-acid polypeptide reads, in one-letter code: Growth-regulated protein homolog alpha (104 aa).

An N-terminal signal peptide occupies residues 1–30 (MAPAATAAAPRLLRAAMLFLLLVAAGRRAA). 2 cysteine pairs are disulfide-bonded: C40-C66 and C42-C82.

Belongs to the intercrine alpha (chemokine CxC) family.

It is found in the secreted. The sequence is that of Growth-regulated protein homolog alpha from Bos taurus (Bovine).